A 392-amino-acid polypeptide reads, in one-letter code: 23S rRNA (uracil(747)-C(5))-methyltransferase RlmC (392 aa).

[4Fe-4S] cluster is bound by residues C4, C12, C15, and C93. S-adenosyl-L-methionine-binding residues include Q218, F247, E275, and N321. The active-site Nucleophile is the C348.

Belongs to the class I-like SAM-binding methyltransferase superfamily. RNA M5U methyltransferase family. RlmC subfamily.

It carries out the reaction uridine(747) in 23S rRNA + S-adenosyl-L-methionine = 5-methyluridine(747) in 23S rRNA + S-adenosyl-L-homocysteine + H(+). Catalyzes the formation of 5-methyl-uridine at position 747 (m5U747) in 23S rRNA. In Haemophilus influenzae (strain PittGG), this protein is 23S rRNA (uracil(747)-C(5))-methyltransferase RlmC.